A 970-amino-acid polypeptide reads, in one-letter code: Vacuolar membrane protease (970 aa).

Positions 1–12 (MTTADSNSSATR) are enriched in polar residues. The interval 1-35 (MTTADSNSSATRGSHEMADGSNRVPNDEPYHRKSP) is disordered. Topologically, residues 1–56 (MTTADSNSSATRGSHEMADGSNRVPNDEPYHRKSPESCENANFFVRAMRASFGYRK) are cytoplasmic. Over residues 25 to 35 (PNDEPYHRKSP) the composition is skewed to basic and acidic residues. The helical transmembrane segment at 57 to 77 (TSLTILVFLSVIATVLLSYYD) threads the bilayer. Residues 78–397 (SSLEFSVSLP…FVVPMTFVFG (320 aa)) are Vacuolar-facing. 2 N-linked (GlcNAc...) asparagine glycosylation sites follow: Asn146 and Asn173. Positions 187 and 199 each coordinate Zn(2+). Residue Glu234 is the Proton acceptor of the active site. Zn(2+)-binding residues include Glu235, Glu260, and His333. The helical transmembrane segment at 398 to 418 (VNVLLMVLVPLVSLISLALIF) threads the bilayer. Topologically, residues 419 to 423 (AHRKW) are cytoplasmic. The helical transmembrane segment at 424–444 (SVSLVTFFKFPLSFILSIFLL) threads the bilayer. The Vacuolar segment spans residues 445–465 (DNFSSWFVVSVNNFLPNSSAG). N-linked (GlcNAc...) asparagine glycosylation is found at Asn446 and Asn461. A helical transmembrane segment spans residues 466 to 486 (IIALTYFSFFVLANYLLLNGI). At 487–502 (NLLFWKFKGTRHDEKL) the chain is on the cytoplasmic side. Residues 503 to 523 (VVILQISFMFWVSLIWSTANI) traverse the membrane as a helical segment. Residues 524-535 (AKSQFNGEHSGE) are Vacuolar-facing. The helical transmembrane segment at 536–556 (FLLTLLYILQAAGGVFGLLCW) threads the bilayer. Residues 557 to 620 (LFKRSRTVHT…PTKHYSYDWS (64 aa)) lie on the Cytoplasmic side of the membrane. The chain crosses the membrane as a helical span at residues 621–641 (IQFLFIVPISSFLSYNYGWLI). Over 642-658 (LEGLKKTLQESATSEYL) the chain is Vacuolar. A helical transmembrane segment spans residues 659 to 679 (VFRALKLLAVVVAVPYLPFIF). Residues 680-683 (KVNR) lie on the Cytoplasmic side of the membrane. A helical membrane pass occupies residues 684–704 (IVFLVTIFLFVYGLGAIVISE). Over 705-970 (PFTEANPLKL…LVNVKKSVLV (266 aa)) the chain is Vacuolar. N-linked (GlcNAc...) asparagine glycans are attached at residues Asn738, Asn797, and Asn877.

Belongs to the peptidase M28 family. Requires Zn(2+) as cofactor.

The protein localises to the vacuole membrane. In terms of biological role, may be involved in vacuolar sorting and osmoregulation. This is Vacuolar membrane protease from Meyerozyma guilliermondii (strain ATCC 6260 / CBS 566 / DSM 6381 / JCM 1539 / NBRC 10279 / NRRL Y-324) (Yeast).